The following is a 603-amino-acid chain: Glutathione-regulated potassium-efflux system protein KefB (603 aa).

The next 13 membrane-spanning stretches (helical) occupy residues 5–25, 29–49, 55–75, 87–107, 115–135, 152–172, 180–202, 207–227, 230–250, 268–288, 291–311, 326–346, and 356–376; these read ALLT…PIAA, IGAV…GLGF, AILH…GLEL, IFGV…GALY, SALI…LQLM, VLLF…ILAG, WERI…YLVR, FIAA…LVLG, LFME…GILL, GLLL…GILY, IVKI…VLYF, FAGV…AAAS, and PLLL…MQLI. The 122-residue stretch at 400 to 521 folds into the RCK N-terminal domain; the sequence is EPQVIVVGFG…VRHFSRETFS (122 aa).

It belongs to the monovalent cation:proton antiporter 2 (CPA2) transporter (TC 2.A.37) family. KefB subfamily. As to quaternary structure, interacts with the regulatory subunit KefG.

It localises to the cell inner membrane. Its function is as follows. Pore-forming subunit of a potassium efflux system that confers protection against electrophiles. Catalyzes K(+)/H(+) antiport. This is Glutathione-regulated potassium-efflux system protein KefB from Pectobacterium carotovorum subsp. carotovorum (strain PC1).